Here is a 189-residue protein sequence, read N- to C-terminus: Alanine and glycine-rich protein (189 aa).

Positions 127-160 (AGAGGGSGGGGGGGSGSGGSGGSGGSGGSGGNDG) are enriched in gly residues. The disordered stretch occupies residues 127–170 (AGAGGGSGGGGGGGSGSGGSGGSGGSGGSGGNDGNDGNDGSSSR).

As to expression, component of the organic matrix of calcified shell layers like nacre and prisms.

It localises to the secreted. The polypeptide is Alanine and glycine-rich protein (Mytilus californianus (California mussel)).